The following is a 134-amino-acid chain: uncharacterized protein (134 aa).

This is an uncharacterized protein from Thermoproteus tenax virus 1 (strain KRA1) (TTV1).